The primary structure comprises 411 residues: UPF0754 membrane protein Npun_R4433 (411 aa).

Transmembrane regions (helical) follow at residues 3–23 (WSHLWLYVSPPVLGGIIGYFT) and 387–407 (IVTLGGVLGFVIGLLQTVFLV).

The protein belongs to the UPF0754 family.

The protein localises to the cell inner membrane. The protein is UPF0754 membrane protein Npun_R4433 of Nostoc punctiforme (strain ATCC 29133 / PCC 73102).